The primary structure comprises 369 residues: Putative agmatine deiminase (369 aa).

The active-site Amidino-cysteine intermediate is the C361.

Belongs to the agmatine deiminase family.

It carries out the reaction agmatine + H2O = N-carbamoylputrescine + NH4(+). This Streptococcus mutans serotype c (strain ATCC 700610 / UA159) protein is Putative agmatine deiminase.